The chain runs to 396 residues: Exodeoxyribonuclease 7 large subunit (396 aa).

The protein belongs to the XseA family. Heterooligomer composed of large and small subunits.

The protein resides in the cytoplasm. It carries out the reaction Exonucleolytic cleavage in either 5'- to 3'- or 3'- to 5'-direction to yield nucleoside 5'-phosphates.. Bidirectionally degrades single-stranded DNA into large acid-insoluble oligonucleotides, which are then degraded further into small acid-soluble oligonucleotides. The polypeptide is Exodeoxyribonuclease 7 large subunit (Clostridium tetani (strain Massachusetts / E88)).